Reading from the N-terminus, the 565-residue chain is Mitochondrial distribution and morphology protein 34 (565 aa).

Positions 1-208 constitute an SMP-LTD domain; it reads MAFNFNWSPL…VPEYRDRESE (208 aa). Positions 209–220 are enriched in polar residues; that stretch reads SVNTLDLSSESG. Disordered stretches follow at residues 209-241, 347-463, and 533-565; these read SVNT…GNAL, FGSY…SRSA, and MQEQ…AYGH. Positions 353–367 are enriched in basic residues; sequence PGRHSRSHTKKRKKR. Positions 368–378 are enriched in basic and acidic residues; sequence VVDLRRPKTTD. Residues 382-391 are compositionally biased toward low complexity; the sequence is SVSGDSVFSS. Composition is skewed to polar residues over residues 392–402 and 439–463; these read ENATSAPTIFS and QGDQ…SRSA.

It belongs to the MDM34 family. In terms of assembly, component of the ER-mitochondria encounter structure (ERMES) or MDM complex, composed of mmm1, mdm10, mdm12 and mdm34.

The protein localises to the mitochondrion outer membrane. Its function is as follows. Component of the ERMES/MDM complex, which serves as a molecular tether to connect the endoplasmic reticulum (ER) and mitochondria. Components of this complex are involved in the control of mitochondrial shape and protein biogenesis, and function in nonvesicular lipid trafficking between the ER and mitochondria. Mdm34 is required for the interaction of the ER-resident membrane protein mmm1 and the outer mitochondrial membrane-resident beta-barrel protein mdm10. The polypeptide is Mitochondrial distribution and morphology protein 34 (Talaromyces marneffei (strain ATCC 18224 / CBS 334.59 / QM 7333) (Penicillium marneffei)).